Consider the following 1452-residue polypeptide: CLIP-associating protein 1 (1452 aa).

HEAT repeat units follow at residues 68–87, 88–124, and 163–200; these read LLGM…RFRS, QIGT…QASN, and LTLS…HVGE. Residues 239-299 are disordered; the sequence is KNFDDEDSVD…GTAKEGAGGV (61 aa). A compositionally biased stretch (low complexity) spans 253 to 267; the sequence is SSASSSASSKAPQAA. 2 HEAT repeats span residues 407-442 and 443-479; these read HGAE…IRQT and HVPR…EWQT. 2 disordered regions span residues 545 to 735 and 771 to 792; these read SDSI…GISQ and YGMY…ERSY. Low complexity predominate over residues 550–569; that stretch reads SLPQSDRSSSSSQESLNRPL. Positions 573-597 are enriched in polar residues; sequence RSPTGSTVSRASTATSKSTPGSLQR. Low complexity-rich tracts occupy residues 606–621, 645–659, and 668–682; these read AATC…ASAA, QSSG…TPAD, and VVSQ…SSPG. The span at 715–724 shows a compositional bias: polar residues; sequence QGCSRETSPS. Residues 781 to 792 show a composition bias toward low complexity; that stretch reads SDASSACSERSY. The HEAT 6 repeat unit spans residues 926–963; that stretch reads QQFNILMRFIVDQTQTPNLKVKVAILKYIESLARQMDP. The interval 1033 to 1076 is disordered; it reads LKNSSNSSMGSPSNTIGRTPSRHSSSRASPLTSPTNCSHGGLSP. Residues 1034-1046 show a composition bias toward low complexity; sequence KNSSNSSMGSPSN. Over residues 1058–1070 the composition is skewed to polar residues; sequence SRASPLTSPTNCS. HEAT repeat units follow at residues 1256–1293 and 1374–1411; these read EHFK…NQPA and QILP…VIGE.

The protein belongs to the CLASP family. In terms of assembly, interacts (via C-terminus) with clip1/clip-170, and cenpe.

The protein localises to the cytoplasm. It localises to the cytoskeleton. It is found in the microtubule organizing center. The protein resides in the centrosome. Its subcellular location is the chromosome. The protein localises to the centromere. It localises to the kinetochore. It is found in the spindle. The protein resides in the golgi apparatus. Its subcellular location is the trans-Golgi network. Microtubule plus-end tracking protein that promotes the stabilization of dynamic microtubules during anaphase. Plays a crucial role in chromatin-induced microtubule formation. May also act at microtubule minus ends. May be involved in the nucleation of noncentrosomal microtubules originating from the trans-Golgi network (TGN). The sequence is that of CLIP-associating protein 1 from Xenopus tropicalis (Western clawed frog).